The chain runs to 200 residues: ADP-ribosylation factor-like protein 4D (200 aa).

G2 carries the N-myristoyl glycine lipid modification. GTP contacts are provided by residues 27 to 34, 75 to 79, and 134 to 137; these read GLDSAGKT, DVGGQ, and NKQD.

Belongs to the small GTPase superfamily. Arf family. In terms of assembly, interacts with CYTH2; the interaction is direct and ARL4D GTP-dependent. Does not interact with ARL4D.

Its subcellular location is the nucleus. The protein localises to the nucleolus. It localises to the cell membrane. It is found in the cytoplasm. Its function is as follows. Small GTP-binding protein which cycles between an inactive GDP-bound and an active GTP-bound form, and the rate of cycling is regulated by guanine nucleotide exchange factors (GEF) and GTPase-activating proteins (GAP). GTP-binding protein that does not act as an allosteric activator of the cholera toxin catalytic subunit. Recruits CYTH1, CYTH2, CYTH3 and CYTH4 to the plasma membrane in GDP-bound form. The polypeptide is ADP-ribosylation factor-like protein 4D (ARL4D) (Bos taurus (Bovine)).